Reading from the N-terminus, the 409-residue chain is 23S rRNA (uracil(747)-C(5))-methyltransferase (409 aa).

The [4Fe-4S] cluster site is built by cysteine 61, cysteine 67, cysteine 70, and cysteine 137. 4 residues coordinate S-adenosyl-L-methionine: glutamine 251, tyrosine 277, glutamate 298, and aspartate 339. The active-site Nucleophile is the cysteine 365.

This sequence belongs to the class I-like SAM-binding methyltransferase superfamily. RNA M5U methyltransferase family.

The catalysed reaction is uridine(747) in 23S rRNA + S-adenosyl-L-methionine = 5-methyluridine(747) in 23S rRNA + S-adenosyl-L-homocysteine + H(+). Catalyzes the formation of 5-methyl-uridine at position equivalent to 747 (m5U747) in 23S rRNA. The chain is 23S rRNA (uracil(747)-C(5))-methyltransferase from Pyrococcus furiosus (strain ATCC 43587 / DSM 3638 / JCM 8422 / Vc1).